We begin with the raw amino-acid sequence, 446 residues long: Adenylosuccinate synthetase (446 aa).

GTP is bound by residues 21-27 (GDEGKGK) and 49-51 (GHT). Catalysis depends on Asp22, which acts as the Proton acceptor. Residues Asp22 and Gly49 each contribute to the Mg(2+) site. IMP contacts are provided by residues 22–25 (DEGK), 47–50 (NAGH), Thr141, Arg155, Gln236, Thr251, and Arg319. His50 acts as the Proton donor in catalysis. 315-321 (VTTGRSR) is a substrate binding site. GTP-binding positions include Arg321, 347-349 (KLD), and 429-431 (STS).

It belongs to the adenylosuccinate synthetase family. Homodimer. It depends on Mg(2+) as a cofactor.

Its subcellular location is the cytoplasm. The catalysed reaction is IMP + L-aspartate + GTP = N(6)-(1,2-dicarboxyethyl)-AMP + GDP + phosphate + 2 H(+). Its pathway is purine metabolism; AMP biosynthesis via de novo pathway; AMP from IMP: step 1/2. Functionally, plays an important role in the de novo pathway of purine nucleotide biosynthesis. Catalyzes the first committed step in the biosynthesis of AMP from IMP. The chain is Adenylosuccinate synthetase from Polaromonas naphthalenivorans (strain CJ2).